Reading from the N-terminus, the 68-residue chain is Palustrin-1c (68 aa).

An N-terminal signal peptide occupies residues 1–22; sequence MFTTKKSLLLLFFLGTISLSLC. A propeptide spanning residues 23–39 is cleaved from the precursor; that stretch reads EEERGADEEEGDGEKLT. A disulfide bond links Cys62 and Cys68.

As to expression, expressed by the skin glands.

It localises to the secreted. Antimicrobial activity against Gram-negative bacterium E.coli. Stimulates insulin release. This Lithobates palustris (Pickerel frog) protein is Palustrin-1c.